The sequence spans 95 residues: Acylphosphatase (95 aa).

The 88-residue stretch at 8 to 95 folds into the Acylphosphatase-like domain; that stretch reads RVSARITGRV…DAFEGFRVRR (88 aa). Catalysis depends on residues Arg23 and Asn41.

Belongs to the acylphosphatase family.

It carries out the reaction an acyl phosphate + H2O = a carboxylate + phosphate + H(+). The chain is Acylphosphatase (acyP) from Salinibacter ruber (strain DSM 13855 / M31).